Reading from the N-terminus, the 390-residue chain is tRNA(Met) cytidine acetate ligase (390 aa).

Residues 7-20 (ITEYNPFHNGHIYH), G101, N152, and R177 contribute to the ATP site.

It belongs to the TmcAL family.

It localises to the cytoplasm. The enzyme catalyses cytidine(34) in elongator tRNA(Met) + acetate + ATP = N(4)-acetylcytidine(34) in elongator tRNA(Met) + AMP + diphosphate. Catalyzes the formation of N(4)-acetylcytidine (ac(4)C) at the wobble position of elongator tRNA(Met), using acetate and ATP as substrates. First activates an acetate ion to form acetyladenylate (Ac-AMP) and then transfers the acetyl group to tRNA to form ac(4)C34. This chain is tRNA(Met) cytidine acetate ligase, found in Leuconostoc mesenteroides subsp. mesenteroides (strain ATCC 8293 / DSM 20343 / BCRC 11652 / CCM 1803 / JCM 6124 / NCDO 523 / NBRC 100496 / NCIMB 8023 / NCTC 12954 / NRRL B-1118 / 37Y).